A 307-amino-acid chain; its full sequence is Ribonuclease Z (307 aa).

Residues H63, H65, D67, H68, H140, D211, and H269 each coordinate Zn(2+). D67 functions as the Proton acceptor in the catalytic mechanism.

The protein belongs to the RNase Z family. In terms of assembly, homodimer. Requires Zn(2+) as cofactor.

It carries out the reaction Endonucleolytic cleavage of RNA, removing extra 3' nucleotides from tRNA precursor, generating 3' termini of tRNAs. A 3'-hydroxy group is left at the tRNA terminus and a 5'-phosphoryl group is left at the trailer molecule.. Functionally, zinc phosphodiesterase, which displays some tRNA 3'-processing endonuclease activity. Probably involved in tRNA maturation, by removing a 3'-trailer from precursor tRNA. This is Ribonuclease Z from Geobacillus kaustophilus (strain HTA426).